Consider the following 504-residue polypeptide: MSFSVDVLANIAIELQRGIGHQDRFQRLITTLRQVLECDASALLRYDSRQFIPLAIDGLAKDVLGRRFALEGHPRLEAIARAGDVVRFPADSELPDPYDGLIPGQESLKVHACVGLPLFAGQNLIGALTLDGMQPDQFDVFSDEELRLIAALAAGALSNALLIEQLESQNMLPGEAAPFEAVKQTQMIGLSPGMTQLKKEIEIVAASDLNVLISGETGTGKELVAKAIHEASPRAVNPLVYLNCAALPESVAESELFGHVKGAFTGAISNRSGKFEMADNGTLFLDEIGELSLALQAKLLRVLQYGDIQRVGDDRSLRVDVRVLAATNRDLREEVLAGRFRADLFHRLSVFPLSVPPLRERGDDVILLAGYFCEQCRLRLGLSRVVLSAGARNLLQHYNFPGNVRELEHAIHRAVVLARATRSGDEVILEAQHFAFPEVTLPPPEVAAVPVVKQNLREATEAFQRETIRQALAQNHHNWAACARMLETDVANLHRLAKRLGLKD.

Aspartate 57 is modified (4-aspartylphosphate). Residues 187-416 form the Sigma-54 factor interaction domain; sequence MIGLSPGMTQ…LEHAIHRAVV (230 aa). Residues 215-222 and 278-287 each bind ATP; these read GETGTGKE and ADNGTLFLDE. The segment at residues 479–498 is a DNA-binding region (H-T-H motif); sequence WAACARMLETDVANLHRLAK.

It participates in nitrogen metabolism; nitric oxide reduction. Its function is as follows. Required for the expression of anaerobic nitric oxide (NO) reductase, acts as a transcriptional activator for at least the norVW operon. Activation also requires sigma-54. This is Anaerobic nitric oxide reductase transcription regulator NorR from Escherichia coli O6:H1 (strain CFT073 / ATCC 700928 / UPEC).